The primary structure comprises 105 residues: U-scoloptoxin(16)-Sm4a (105 aa).

Residues 1–22 (MWALTVFVTILAAAIPITGVTG) form the signal peptide.

It belongs to the scoloptoxin-16 family. In terms of processing, contains 4 disulfide bonds. In terms of tissue distribution, expressed by the venom gland.

It is found in the secreted. The sequence is that of U-scoloptoxin(16)-Sm4a from Scolopendra morsitans (Tanzanian blue ringleg centipede).